The sequence spans 118 residues: HTH-type transcriptional regulator CmtR (118 aa).

One can recognise an HTH arsR-type domain in the interval 3-97 (TCEMRESALA…ELVQVVLAVD (95 aa)). Positions 57, 61, and 102 each coordinate Cd(2+).

In terms of assembly, homodimer.

Functionally, metal-responsive transcriptional repressor for the cmt operon. Binding of cadmium or lead causes the repressor to dissociate from the DNA. This chain is HTH-type transcriptional regulator CmtR (cmtR), found in Mycobacterium bovis (strain ATCC BAA-935 / AF2122/97).